Reading from the N-terminus, the 137-residue chain is Large ribosomal subunit protein bL17 (137 aa).

The protein belongs to the bacterial ribosomal protein bL17 family. Part of the 50S ribosomal subunit. Contacts protein L32.

The polypeptide is Large ribosomal subunit protein bL17 (Bradyrhizobium sp. (strain BTAi1 / ATCC BAA-1182)).